Here is a 61-residue protein sequence, read N- to C-terminus: Beta-insect depressant toxin BotIT5 (61 aa).

The region spanning 1-61 (DGYIRKRDGC…TWKSETNTCG (61 aa)) is the LCN-type CS-alpha/beta domain. 4 disulfide bridges follow: Cys10-Cys60, Cys14-Cys35, Cys21-Cys42, and Cys25-Cys44. Gly61 is modified (glycine amide).

The protein belongs to the long (4 C-C) scorpion toxin superfamily. Sodium channel inhibitor family. Beta subfamily. Expressed by the venom gland.

It is found in the secreted. In terms of biological role, depressant insect beta-toxins cause a transient contraction paralysis followed by a slow flaccid paralysis. They bind voltage-independently at site-4 of sodium channels (Nav) and shift the voltage of activation toward more negative potentials thereby affecting sodium channel activation and promoting spontaneous and repetitive firing. This toxin is active only on insects. In Buthus occitanus tunetanus (Common European scorpion), this protein is Beta-insect depressant toxin BotIT5.